The following is a 79-amino-acid chain: D-alanyl carrier protein (79 aa).

One can recognise a Carrier domain in the interval 1 to 77 (MDIKSEVLKI…KIIEGITELR (77 aa)). An O-(pantetheine 4'-phosphoryl)serine modification is found at Ser35.

This sequence belongs to the DltC family. In terms of processing, 4'-phosphopantetheine is transferred from CoA to a specific serine of apo-DCP.

Its subcellular location is the cytoplasm. Its pathway is cell wall biogenesis; lipoteichoic acid biosynthesis. Functionally, carrier protein involved in the D-alanylation of lipoteichoic acid (LTA). The loading of thioester-linked D-alanine onto DltC is catalyzed by D-alanine--D-alanyl carrier protein ligase DltA. The DltC-carried D-alanyl group is further transferred to cell membrane phosphatidylglycerol (PG) by forming an ester bond, probably catalyzed by DltD. D-alanylation of LTA plays an important role in modulating the properties of the cell wall in Gram-positive bacteria, influencing the net charge of the cell wall. The polypeptide is D-alanyl carrier protein (Streptococcus mutans serotype c (strain ATCC 700610 / UA159)).